The primary structure comprises 211 residues: Thiamine-phosphate synthase (211 aa).

4-amino-2-methyl-5-(diphosphooxymethyl)pyrimidine contacts are provided by residues 37 to 41 and N69; that span reads QLRIK. Mg(2+) is bound by residues D70 and D89. S108 lines the 4-amino-2-methyl-5-(diphosphooxymethyl)pyrimidine pocket. Residue 134-136 coordinates 2-[(2R,5Z)-2-carboxy-4-methylthiazol-5(2H)-ylidene]ethyl phosphate; the sequence is TQT. Residue K137 participates in 4-amino-2-methyl-5-(diphosphooxymethyl)pyrimidine binding. Residues G166 and 186–187 contribute to the 2-[(2R,5Z)-2-carboxy-4-methylthiazol-5(2H)-ylidene]ethyl phosphate site; that span reads VS.

It belongs to the thiamine-phosphate synthase family. Requires Mg(2+) as cofactor.

The catalysed reaction is 2-[(2R,5Z)-2-carboxy-4-methylthiazol-5(2H)-ylidene]ethyl phosphate + 4-amino-2-methyl-5-(diphosphooxymethyl)pyrimidine + 2 H(+) = thiamine phosphate + CO2 + diphosphate. It catalyses the reaction 2-(2-carboxy-4-methylthiazol-5-yl)ethyl phosphate + 4-amino-2-methyl-5-(diphosphooxymethyl)pyrimidine + 2 H(+) = thiamine phosphate + CO2 + diphosphate. It carries out the reaction 4-methyl-5-(2-phosphooxyethyl)-thiazole + 4-amino-2-methyl-5-(diphosphooxymethyl)pyrimidine + H(+) = thiamine phosphate + diphosphate. It participates in cofactor biosynthesis; thiamine diphosphate biosynthesis; thiamine phosphate from 4-amino-2-methyl-5-diphosphomethylpyrimidine and 4-methyl-5-(2-phosphoethyl)-thiazole: step 1/1. Its function is as follows. Condenses 4-methyl-5-(beta-hydroxyethyl)thiazole monophosphate (THZ-P) and 2-methyl-4-amino-5-hydroxymethyl pyrimidine pyrophosphate (HMP-PP) to form thiamine monophosphate (TMP). The sequence is that of Thiamine-phosphate synthase from Salmonella newport (strain SL254).